A 384-amino-acid chain; its full sequence is Zinc finger CCCH domain-containing protein 12 (384 aa).

Disordered regions lie at residues 1–32 and 46–81; these read MSHH…NLGD and WAMN…SAAS. A compositionally biased stretch (polar residues) spans 50-60; that stretch reads PDNTSGDNNGP. The span at 70–81 shows a compositional bias: low complexity; sequence SSSSATTTSAAS. C3H1-type zinc fingers lie at residues 91–118 and 172–200; these read FFKT…HTVE and SFKG…HDEA. Positions 211–231 are disordered; the sequence is LGPGGYGSGGGGGSGGGSVGG. The span at 212–231 shows a compositional bias: gly residues; it reads GPGGYGSGGGGGSGGGSVGG. The C3H1-type 3 zinc finger occupies 260-288; it reads NWKTRICNKWEITGYCPFGAKCHFAHGAA. The segment at 299–335 is disordered; that stretch reads EEEGKDGVSPNPDTKQTVQNPKGLSDTTTLLSPGVPH. Over residues 309–329 the composition is skewed to polar residues; it reads NPDTKQTVQNPKGLSDTTTLL.

This Arabidopsis thaliana (Mouse-ear cress) protein is Zinc finger CCCH domain-containing protein 12.